We begin with the raw amino-acid sequence, 130 residues long: Small ribosomal subunit protein uS8 (130 aa).

It belongs to the universal ribosomal protein uS8 family. In terms of assembly, part of the 30S ribosomal subunit. Contacts proteins S5 and S12.

In terms of biological role, one of the primary rRNA binding proteins, it binds directly to 16S rRNA central domain where it helps coordinate assembly of the platform of the 30S subunit. In Pasteurella multocida (strain Pm70), this protein is Small ribosomal subunit protein uS8.